The following is a 317-amino-acid chain: ADP-L-glycero-D-manno-heptose-6-epimerase (317 aa).

NADP(+)-binding positions include 10-11 (FI), 31-32 (DD), Lys38, Lys53, 75-79 (QGACS), and Asn92. The Proton acceptor role is filled by Tyr139. Lys143 lines the NADP(+) pocket. Asn166 contacts substrate. NADP(+)-binding residues include Val167 and Lys175. Lys175 (proton acceptor) is an active-site residue. Residues Gly177, His184, 198-201 (FQGH), Arg211, and Tyr275 contribute to the substrate site.

This sequence belongs to the NAD(P)-dependent epimerase/dehydratase family. HldD subfamily. Homopentamer. Requires NADP(+) as cofactor.

The catalysed reaction is ADP-D-glycero-beta-D-manno-heptose = ADP-L-glycero-beta-D-manno-heptose. It functions in the pathway nucleotide-sugar biosynthesis; ADP-L-glycero-beta-D-manno-heptose biosynthesis; ADP-L-glycero-beta-D-manno-heptose from D-glycero-beta-D-manno-heptose 7-phosphate: step 4/4. In terms of biological role, catalyzes the interconversion between ADP-D-glycero-beta-D-manno-heptose and ADP-L-glycero-beta-D-manno-heptose via an epimerization at carbon 6 of the heptose. The polypeptide is ADP-L-glycero-D-manno-heptose-6-epimerase (Shewanella loihica (strain ATCC BAA-1088 / PV-4)).